Consider the following 211-residue polypeptide: ATP phosphoribosyltransferase (211 aa).

It belongs to the ATP phosphoribosyltransferase family. Short subfamily. As to quaternary structure, heteromultimer composed of HisG and HisZ subunits.

The protein resides in the cytoplasm. It catalyses the reaction 1-(5-phospho-beta-D-ribosyl)-ATP + diphosphate = 5-phospho-alpha-D-ribose 1-diphosphate + ATP. It participates in amino-acid biosynthesis; L-histidine biosynthesis; L-histidine from 5-phospho-alpha-D-ribose 1-diphosphate: step 1/9. In terms of biological role, catalyzes the condensation of ATP and 5-phosphoribose 1-diphosphate to form N'-(5'-phosphoribosyl)-ATP (PR-ATP). Has a crucial role in the pathway because the rate of histidine biosynthesis seems to be controlled primarily by regulation of HisG enzymatic activity. This chain is ATP phosphoribosyltransferase, found in Sorangium cellulosum (strain So ce56) (Polyangium cellulosum (strain So ce56)).